Consider the following 91-residue polypeptide: Small ribosomal subunit protein bS20 (91 aa).

The tract at residues 72-91 (KNAASRQKSRLAKKLNGLSA) is disordered.

Belongs to the bacterial ribosomal protein bS20 family.

Functionally, binds directly to 16S ribosomal RNA. The polypeptide is Small ribosomal subunit protein bS20 (Halalkalibacterium halodurans (strain ATCC BAA-125 / DSM 18197 / FERM 7344 / JCM 9153 / C-125) (Bacillus halodurans)).